Consider the following 200-residue polypeptide: Ubiquinol-cytochrome-c reductase complex assembly factor 1 (200 aa).

It belongs to the CBP3 family.

The protein resides in the mitochondrion inner membrane. Its function is as follows. Required for the assembly of the ubiquinol-cytochrome c reductase complex (mitochondrial respiratory chain complex III or cytochrome b-c1 complex). May be involved in cytochrome b translation and/or stability. This is Ubiquinol-cytochrome-c reductase complex assembly factor 1 (uqcc1) from Xenopus laevis (African clawed frog).